A 242-amino-acid chain; its full sequence is EF-hand domain-containing protein D2 (242 aa).

Residues 1 to 53 are disordered; the sequence is MATDELASKLSRRLQMEGEGGGEAPEQPGLNGAAAAAAAAGAPDETAEALGSA. At Ala2 the chain carries N-acetylalanine. Ser11 bears the Phosphoserine mark. Residues 32 to 42 show a composition bias toward low complexity; the sequence is GAAAAAAAAGA. Phosphoserine is present on residues Ser76 and Ser78. Tyr85 carries the post-translational modification Phosphotyrosine. EF-hand domains follow at residues 94–129 and 130–165; these read KQIKDMEKMFKEYDAGRDGFIDLMELKLMMEKLGAP and QTHLGLKNMIKEVDEDFDSKLSFREFLLIFRKAAAG. Positions 107, 111, 118, 143, 145, 147, 149, and 154 each coordinate Ca(2+). Residue Lys235 is modified to N6-acetyllysine.

Interacts with CASP9; with inactive form.

The protein localises to the membrane raft. Functionally, may regulate B-cell receptor (BCR)-induced immature and primary B-cell apoptosis. Plays a role as negative regulator of the canonical NF-kappa-B-activating branch. Controls spontaneous apoptosis through the regulation of BCL2L1 abundance. The polypeptide is EF-hand domain-containing protein D2 (EFHD2) (Bos taurus (Bovine)).